The following is a 282-amino-acid chain: Probable iron transport system membrane protein HI_0360 (282 aa).

8 helical membrane passes run 17 to 37, 63 to 83, 93 to 113, 140 to 160, 164 to 184, 186 to 206, 223 to 243, and 245 to 265; these read AMILSTAVGGICAFLSSYLML, LPYALGAFFAGILAALSILWI, AVIGFIFSTFFALGLLIVSLN, IIIGVCLVLLLLFWKDLLLIF, TQAITVGLSPLFYKILFFTLL, ACVVAALQTVGAILVIAMVVT, IIAIILGAVTSFVGVYISYYL, and GATGGVIVTLQTLLFLVAFLF.

Belongs to the ABC-3 integral membrane protein family.

It localises to the cell inner membrane. Functionally, part of an ATP-driven transport system HI_0359/HI_0360/HI_0361/HI_0362 for iron. The chain is Probable iron transport system membrane protein HI_0360 from Haemophilus influenzae (strain ATCC 51907 / DSM 11121 / KW20 / Rd).